The chain runs to 472 residues: P2X purinoceptor 2 (472 aa).

Over 1-34 the chain is Cytoplasmic; sequence MVRRLARGCWSAFWDYETPKVIVVRNRRLGFVHR. Cystine bridges form between cysteine 9-cysteine 430, cysteine 113-cysteine 164, cysteine 124-cysteine 147, cysteine 130-cysteine 158, cysteine 214-cysteine 224, and cysteine 258-cysteine 267. The helical transmembrane segment at 35 to 52 threads the bilayer; sequence MVQLLILLYFVWYVFIVQ. Topologically, residues 53-326 are extracellular; that stretch reads KSYQDSETGP…IVHGQAGKFS (274 aa). ATP contacts are provided by lysine 69 and lysine 71. A glycan (N-linked (GlcNAc...) asparagine) is linked at asparagine 182. Threonine 184 provides a ligand contact to ATP. A glycan (N-linked (GlcNAc...) asparagine) is linked at asparagine 239. ATP is bound by residues serine 284, asparagine 288, and arginine 290. Asparagine 298 is a glycosylation site (N-linked (GlcNAc...) asparagine). Lysine 308 contributes to the ATP binding site. The tract at residues 309–322 is pore-forming motif; that stretch reads AYGIRIDVIVHGQA. Residues 327 to 347 traverse the membrane as a helical segment; the sequence is LIPTIINLATALTSIGVGSFL. Topologically, residues 348–472 are cytoplasmic; the sequence is CDWILLTFMN…STDPKGLAQL (125 aa). Positions 393-472 are disordered; that stretch reads PPPSHYSQDQ…STDPKGLAQL (80 aa). Residues 456–465 show a composition bias toward polar residues; that stretch reads PSQQDSTSTD.

The protein belongs to the P2X receptor family. In terms of assembly, homotrimer and heterotrimer; functional P2XRs are organized as homomeric and heteromeric trimers. Homotrimer. Forms heterotrimer with P2RX1. Forms heterotrimer with P2RX6. Forms heterotrimer with P2RX3. As to expression, high levels in pituitary and vas deferens. Lower extent in spinal cord, bladder, brain, adrenal, testis, sensory epithelia from the inner ear.

The protein localises to the cell membrane. It carries out the reaction Ca(2+)(in) = Ca(2+)(out). The enzyme catalyses K(+)(in) = K(+)(out). It catalyses the reaction Na(+)(in) = Na(+)(out). Fast activation by external ATP. Exhibits slow desensitization during prolonged ATP activation. Not sensitive to the ATP agonist:alpha/beta-methylene-ATP. Functionally, ATP-gated nonselective transmembrane cation channel permeable to potassium, sodium and calcium. Activation by extracellular ATP induces a variety of cellular responses, such as excitatory postsynaptic responses in sensory neurons, neuromuscular junctions (NMJ) formation, hearing, perception of taste and peristalsis. In the inner ear, regulates sound transduction and auditory neurotransmission, outer hair cell electromotility, inner ear gap junctions, and K(+) recycling. Mediates synaptic transmission between neurons and from neurons to smooth muscle. The polypeptide is P2X purinoceptor 2 (P2rx2) (Rattus norvegicus (Rat)).